Reading from the N-terminus, the 660-residue chain is Interferon-induced GTP-binding protein Mx1 (660 aa).

Residue Met-1 is modified to N-acetylmethionine. Positions 1 to 10 (MVHSEAKMTR) are enriched in basic and acidic residues. A disordered region spans residues 1–29 (MVHSEAKMTRPDSASASKQQLLNGNADIQ). Polar residues predominate over residues 12–29 (DSASASKQQLLNGNADIQ). The Dynamin-type G domain occupies 67–340 (DLALPAIAVI…LITHISKSLP (274 aa)). Residues 77–84 (GDQSSGKS) are G1 motif. 77–84 (GDQSSGKS) provides a ligand contact to GTP. The interval 102-104 (VTR) is G2 motif. The G3 motif stretch occupies residues 178-181 (DLPG). GTP-binding positions include 178-182 (DLPGI) and 247-250 (TKPD). Residues 247 to 250 (TKPD) form a G4 motif region. The segment at 279–282 (KCRG) is G5 motif. The bundle signaling element (BSE) stretch occupies residues 341-366 (LLENQIKESYQNLSDELQKYGTDIPE). Residues 366 to 533 (EDETEKTFFL…HFQMEKIVYC (168 aa)) are middle domain. Positions 367–630 (DETEKTFFLI…RDTYDWLLKE (264 aa)) are stalk. Residues 554 to 557 (KKKK) form a critical for lipid-binding region. The 89-residue stretch at 572–660 (MAEILEHLNA…ARRRLAKFPG (89 aa)) folds into the GED domain.

Belongs to the TRAFAC class dynamin-like GTPase superfamily. Dynamin/Fzo/YdjA family. Homooligomer. Oligomerizes into multimeric filamentous or ring-like structures by virtue of its stalk domain. Oligomerization is critical for GTPase activity, protein stability, and recognition of viral target structures. Interacts with TRPC1, TRPC3, TRPC4, TRPC5, TRPC6 and TRPC7. Interacts with HSPA5. Interacts with TUBB/TUBB5. Interacts with DDX39A and DDX39B. In terms of processing, ISGylated.

It localises to the cytoplasm. The protein localises to the endoplasmic reticulum membrane. It is found in the perinuclear region. Interferon-induced dynamin-like GTPase with antiviral activity. The sequence is that of Interferon-induced GTP-binding protein Mx1 (MX1) from Equus caballus (Horse).